The sequence spans 321 residues: Olfactory receptor 52P1 (321 aa).

The Extracellular portion of the chain corresponds to 1-27 (MESPNHTDVDPSVFFLLGIPGLEQFHL). A glycan (N-linked (GlcNAc...) asparagine) is linked at asparagine 5. The chain crosses the membrane as a helical span at residues 28–48 (WLSLPVCGLGTATIVGNITIL). Topologically, residues 49-56 (VVVATEPV) are cytoplasmic. The chain crosses the membrane as a helical span at residues 57-77 (LHKPVYLFLCMLSTIDLAASV). Residues 78–101 (STVPKLLAIFWCGAGHISASACLA) lie on the Extracellular side of the membrane. A disulfide bond links cysteine 99 and cysteine 191. A helical membrane pass occupies residues 102–122 (QMFFIHAFCMMESTVLLAMAF). The Cytoplasmic segment spans residues 123–141 (DRYVAICHPLRYATILTDT). A helical membrane pass occupies residues 142-162 (IIAHIGVAAVVRGSLLMLPCP). Topologically, residues 163–198 (FLIGRLNFCQSHVILHTYCEHMAVVKLACGDTRPNR) are extracellular. The chain crosses the membrane as a helical span at residues 199–219 (VYGLTAALLVIGVDLFCIGLS). Topologically, residues 220-239 (YALSAQAVLRLSSHEARSKA) are cytoplasmic. A helical membrane pass occupies residues 240 to 260 (LGTCGSHVCVILISYTPALFS). Topologically, residues 261–275 (FFTHRFGHHVPVHIH) are extracellular. Residues 276 to 296 (ILLANVYLLLPPALNPVVYGV) traverse the membrane as a helical segment. The Cytoplasmic portion of the chain corresponds to 297–315 (KTKQIRKRVVRVFQSGQGM).

Belongs to the G-protein coupled receptor 1 family.

The protein resides in the cell membrane. Odorant receptor. This chain is Olfactory receptor 52P1, found in Homo sapiens (Human).